The primary structure comprises 408 residues: Histidine--tRNA ligase (408 aa).

The protein belongs to the class-II aminoacyl-tRNA synthetase family. In terms of assembly, homodimer.

Its subcellular location is the cytoplasm. The catalysed reaction is tRNA(His) + L-histidine + ATP = L-histidyl-tRNA(His) + AMP + diphosphate + H(+). The polypeptide is Histidine--tRNA ligase (Campylobacter jejuni subsp. jejuni serotype O:23/36 (strain 81-176)).